We begin with the raw amino-acid sequence, 313 residues long: Adhesin MafA 1 (313 aa).

Residues 1–14 form the signal peptide; sequence MKILLLLIPLVLTA. A lipid anchor (N-palmitoyl cysteine) is attached at Cys-15. Cys-15 is lipidated: S-diacylglycerol cysteine. The segment covering 282–298 has biased composition (polar residues); the sequence is GDTTAQNRPDFKQNNGK. Residues 282–313 are disordered; sequence GDTTAQNRPDFKQNNGKNPDVGNEVIRRRKGG.

It belongs to the MafA family.

It is found in the cell outer membrane. This chain is Adhesin MafA 1 (mafA1), found in Neisseria meningitidis serogroup C / serotype 2a (strain ATCC 700532 / DSM 15464 / FAM18).